Reading from the N-terminus, the 171-residue chain is Ribosome maturation factor RimM (171 aa).

The PRC barrel domain maps to 97–170; that stretch reads EGEYYYHEII…LVTIHVMEGL (74 aa).

This sequence belongs to the RimM family. In terms of assembly, binds ribosomal protein uS19.

It is found in the cytoplasm. Its function is as follows. An accessory protein needed during the final step in the assembly of 30S ribosomal subunit, possibly for assembly of the head region. Essential for efficient processing of 16S rRNA. May be needed both before and after RbfA during the maturation of 16S rRNA. It has affinity for free ribosomal 30S subunits but not for 70S ribosomes. This is Ribosome maturation factor RimM from Bacillus thuringiensis (strain Al Hakam).